The primary structure comprises 397 residues: Major outer membrane porin, serovar H (397 aa).

The N-terminal stretch at 1–22 (MKKLLKSVLVFAALSSASSLQA) is a signal peptide.

This sequence belongs to the chlamydial porin (CP) (TC 1.B.2) family. As to quaternary structure, part of a disulfide cross-linked outer membrane complex (COMC) composed of the major outer membrane porin (MOMP), the small cysteine-rich protein (OmcA) and the large cysteine-rich periplasmic protein (OmcB).

Its subcellular location is the cell outer membrane. Its function is as follows. In elementary bodies (EBs, the infectious stage, which is able to survive outside the host cell) provides the structural integrity of the outer envelope through disulfide cross-links with the small cysteine-rich protein and the large cysteine-rich periplasmic protein. It has been described in publications as the Sarkosyl-insoluble COMC (Chlamydia outer membrane complex), and serves as the functional equivalent of peptidoglycan. In terms of biological role, permits diffusion of specific solutes through the outer membrane. This Chlamydia trachomatis protein is Major outer membrane porin, serovar H (ompA).